We begin with the raw amino-acid sequence, 260 residues long: Thiazole synthase (260 aa).

Catalysis depends on Lys100, which acts as the Schiff-base intermediate with DXP. Residues Gly161, 187 to 188 (AG), and 209 to 210 (NT) each bind 1-deoxy-D-xylulose 5-phosphate.

It belongs to the ThiG family. As to quaternary structure, homotetramer. Forms heterodimers with either ThiH or ThiS.

It is found in the cytoplasm. It catalyses the reaction [ThiS sulfur-carrier protein]-C-terminal-Gly-aminoethanethioate + 2-iminoacetate + 1-deoxy-D-xylulose 5-phosphate = [ThiS sulfur-carrier protein]-C-terminal Gly-Gly + 2-[(2R,5Z)-2-carboxy-4-methylthiazol-5(2H)-ylidene]ethyl phosphate + 2 H2O + H(+). It functions in the pathway cofactor biosynthesis; thiamine diphosphate biosynthesis. Functionally, catalyzes the rearrangement of 1-deoxy-D-xylulose 5-phosphate (DXP) to produce the thiazole phosphate moiety of thiamine. Sulfur is provided by the thiocarboxylate moiety of the carrier protein ThiS. In vitro, sulfur can be provided by H(2)S. The polypeptide is Thiazole synthase (Dechloromonas aromatica (strain RCB)).